Consider the following 1029-residue polypeptide: MLKIFEKVFGSKHDKDIKKIKPLVDEINEIYATFASLSDDQLRAKSMALKSNLQEELTLIRQQNSDLSGKLENPDITISQIESINRELDELEKKYEEETAAALEKILPETFAIVKDTCRRLKGHTYQVMDHTMTWDMIPYDVQLLGGIVLHQGKVTEMATGEGKTLVSTLPAFLNALTGRGVHIVTVNDYLAQRDREWMSPVFEFHGIETGVILSGMRPEERKKEYACDITYGTNNEFGFDYLRDNMAGSPADLVQKEYYYGIVDEVDSVLIDEARTPLIISGPVPNANTSKFTEIKPWMERLVKNQQNLVAGYLAEAEKVVKEKPNDFQAALALLRAKRGQPKNTRLIKMLSQTGMAKLMQSAENEYLKDNSRRMHEVDDELYFSIDEKSNAIDLTDKGRDFLSKLSNQDSDLFLVPDVGAEIAAIESDEALDTEQKIKKKDEVYRLFSDRSEKLHNISQLLKAYSLFEKDDDYVVQNGQVMIVDEFTGRILPGRRYSDGLHQAIEAKENVKIEGETQTLATITIQNFFRLYKKLSGMTGTAETESAELFDIYKLDVVVIPTNRPIIRKDQDDYVYKTRKEKYAAIIGKIIELQKKGQPVLVGTASVDVSETLSRMLRAKKITHNVLNAKQHGREAEIVASAGQNGAVTIATNMAGRGTDIKLGEGVKELGGLYILGSERHESRRIDRQLRGRSGRQGDPGESIFYVSLEDNLMRLFGSDRVISIMDKLGHEEGDVIEHSMVTKSIERAQKKVEEQNFSIRKRLLEYDDVLNQQRDVIYKRRKGALTKKRLTADIFDLLHDYSENTVNQYAREFDVKGLEEQVLRDLSVEFRIESITFENEGVEKTAEQLYKAALEFYKRKEDVVPEEIMGQIEKYAVLNVIDQKWREHLREIDSLKEGINLRAYGQKDPLLEYKQEAYKLFVSMLGEIEHETLSLAFKLFPVTEEAREKIEQEQKKSQVQQDRLVARHEKAETAYENSGSRPEGRQEKKAENGKEPLQQPVIADKTPGRNDPCSCGSGKKYKNCCGK.

ATP contacts are provided by residues Gln-143, 161 to 165 (GEGKT), and Asp-661. A disordered region spans residues 953–1029 (EQEQKKSQVQ…GKKYKNCCGK (77 aa)). 2 stretches are compositionally biased toward basic and acidic residues: residues 966–975 (LVARHEKAET) and 984–996 (PEGR…ENGK). The Zn(2+) site is built by Cys-1015, Cys-1017, Cys-1026, and Cys-1027.

It belongs to the SecA family. In terms of assembly, monomer and homodimer. Part of the essential Sec protein translocation apparatus which comprises SecA, SecYEG and auxiliary proteins SecDF. Other proteins may also be involved. Zn(2+) serves as cofactor.

The protein localises to the cell inner membrane. The protein resides in the cytoplasm. The enzyme catalyses ATP + H2O + cellular proteinSide 1 = ADP + phosphate + cellular proteinSide 2.. Part of the Sec protein translocase complex. Interacts with the SecYEG preprotein conducting channel. Has a central role in coupling the hydrolysis of ATP to the transfer of proteins into and across the cell membrane, serving as an ATP-driven molecular motor driving the stepwise translocation of polypeptide chains across the membrane. The polypeptide is Protein translocase subunit SecA (Chlorobium phaeobacteroides (strain BS1)).